Here is a 392-residue protein sequence, read N- to C-terminus: GPI alpha-1,4-mannosyltransferase I, catalytic subunit (392 aa).

Residues M1 to R4 are Cytoplasmic-facing. The chain crosses the membrane as a helical span at residues V5–Y25. Residues Q26–P65 are Lumenal-facing. The chain crosses the membrane as a helical span at residues L66–F86. Over G87–M125 the chain is Cytoplasmic. Residues A126 to L148 traverse the membrane as a helical segment. Residues Q149–A156 lie on the Lumenal side of the membrane. Residues A157–I177 form a helical membrane-spanning segment. Residues A178–P198 are Cytoplasmic-facing. Residues A199–Y219 traverse the membrane as a helical segment. The Lumenal segment spans residues C220–S261. A helical membrane pass occupies residues G262 to F282. Over S283 to R302 the chain is Cytoplasmic. The helical transmembrane segment at V303–L323 threads the bilayer. At R324–G330 the chain is on the lumenal side. The helical transmembrane segment at L331–L351 threads the bilayer. Residues E352–S360 lie on the Cytoplasmic side of the membrane. The chain crosses the membrane as a helical span at residues W361 to I381. Residues Q382–D392 are Lumenal-facing.

This sequence belongs to the PIGM family. In terms of assembly, part of the glycosylphosphatidylinositol-mannosyltransferase I complex that is composed of PIGM and PIGX.

It localises to the endoplasmic reticulum membrane. It functions in the pathway glycolipid biosynthesis; glycosylphosphatidylinositol-anchor biosynthesis. In terms of biological role, catalytic subunit of the glycosylphosphatidylinositol-mannosyltransferase I complex which catalyzes the transfer of the first mannose, via an alpha-1,4 bond from a dolichol-phosphate-mannose (Dol-P-Man) to the glucosaminyl acyl phosphatidylinositol (GlcN-(acyl)PI) intermediate to generate alpha-D-Man-(1-&gt;4)-alpha-D-GlcN-(1-&gt;6)-(1-radyl,2-acyl-sn-glycero-3-phospho)-2-acyl-inositol and participates in the sixth step of the glycosylphosphatidylinositol-anchor biosynthesis. The sequence is that of GPI alpha-1,4-mannosyltransferase I, catalytic subunit from Danio rerio (Zebrafish).